A 170-amino-acid polypeptide reads, in one-letter code: Large ribosomal subunit protein uL6m (170 aa).

This sequence belongs to the universal ribosomal protein uL6 family.

Its subcellular location is the mitochondrion. The chain is Large ribosomal subunit protein uL6m (mrpl6) from Dictyostelium discoideum (Social amoeba).